Reading from the N-terminus, the 20-residue chain is Venom protease (20 aa).

This sequence belongs to the peptidase S1 family. In terms of processing, contains 3 disulfide bonds. Post-translationally, N-glycosylated. As to expression, expressed by the venom duct.

It is found in the secreted. The sequence is that of Venom protease from Bombus terrestris (Buff-tailed bumblebee).